Consider the following 179-residue polypeptide: Large ribosomal subunit protein uL5c (179 aa).

This sequence belongs to the universal ribosomal protein uL5 family. Part of the 50S ribosomal subunit; contacts the 5S rRNA.

The protein resides in the plastid. In terms of biological role, binds 5S rRNA, forms part of the central protuberance of the 50S subunit. This is Large ribosomal subunit protein uL5c (rpl5) from Euglena longa (Euglenophycean alga).